The primary structure comprises 318 residues: Aquaporin-1 (318 aa).

Positions 1–16 (MVQFGSRANTNMTGLP) are enriched in polar residues. The disordered stretch occupies residues 1–27 (MVQFGSRANTNMTGLPTEQAVEDRRVG). Over 1-36 (MVQFGSRANTNMTGLPTEQAVEDRRVGNPKRDRMRN) the chain is Cytoplasmic. A helical membrane pass occupies residues 37–57 (ALVIVLGEFCGTFMFLLLSFI). Residues 58–77 (GAQTALVTNSPSDAGSPLLP) are Extracellular-facing. Residues 78–98 (FSLMYIAASFGTALAVNVWIF) traverse the membrane as a helical segment. The Cytoplasmic segment spans residues 99–108 (YRVSGGMFNP). Residues 107–109 (NPA) carry the NPA 1 motif. Residues 109–129 (AVTLGLVLVGAVTPIHALLII) traverse the membrane as a helical segment. Residues 130–165 (PTQLVAAITAAGITDALLPGKLLVTNALGNGTSVAQ) lie on the Extracellular side of the membrane. N-linked (GlcNAc...) asparagine glycosylation is present at Asn-159. Residues 166-186 (GVFIEMFLTSQLVLTVYFLAV) form a helical membrane-spanning segment. The Cytoplasmic portion of the chain corresponds to 187–193 (EKHRSTH). The chain crosses the membrane as a helical span at residues 194–214 (LAPIGIGISVFIAHICATNWT). Residues 215–236 (GTSINPARSFGPSVVAGFHGYD) are Extracellular-facing. The NPA 2 signature appears at 219–221 (NPA). A helical transmembrane segment spans residues 237-257 (WIYYIGPFMGSLLAFGCYKIF). Topologically, residues 258 to 318 (KVLEYQTANP…NDSVIDDQMV (61 aa)) are cytoplasmic. A disordered region spans residues 268-318 (GQDDDNLDRSGHHHFFGHRKEPMPHTHTDNIEPKDHGVPQRNDSVIDDQMV). Residues 285–305 (HRKEPMPHTHTDNIEPKDHGV) are compositionally biased toward basic and acidic residues.

Belongs to the MIP/aquaporin (TC 1.A.8) family.

The protein localises to the nucleus membrane. It carries out the reaction H2O(in) = H2O(out). Probable water channel involved in responses to changes in environmental conditions and conidiation. Involved in responses to hyperosmotic conditions, oxidative stress and cell wall destabilization. Also required for proper transcriptional activation of genes involved in aurofusarin biosynthesis. Not involved in pathogenicity, but negatively regulates deoxynivalenol (DON) production. This Gibberella zeae (strain ATCC MYA-4620 / CBS 123657 / FGSC 9075 / NRRL 31084 / PH-1) (Wheat head blight fungus) protein is Aquaporin-1.